We begin with the raw amino-acid sequence, 26 residues long: Unknown protein 16 (26 aa).

The tract at residues 1-26 (AINSESGVRSVVPQPCNALPNQGPEK) is disordered.

In Pseudotsuga menziesii (Douglas-fir), this protein is Unknown protein 16.